Here is a 38-residue protein sequence, read N- to C-terminus: Large ribosomal subunit protein bL36A (38 aa).

It belongs to the bacterial ribosomal protein bL36 family.

The polypeptide is Large ribosomal subunit protein bL36A (Prochlorococcus marinus (strain MIT 9515)).